A 178-amino-acid chain; its full sequence is Large ribosomal subunit protein uL6 (178 aa).

This sequence belongs to the universal ribosomal protein uL6 family. As to quaternary structure, part of the 50S ribosomal subunit.

Its function is as follows. This protein binds to the 23S rRNA, and is important in its secondary structure. It is located near the subunit interface in the base of the L7/L12 stalk, and near the tRNA binding site of the peptidyltransferase center. In Frankia casuarinae (strain DSM 45818 / CECT 9043 / HFP020203 / CcI3), this protein is Large ribosomal subunit protein uL6.